Consider the following 331-residue polypeptide: 5-dehydro-2-deoxygluconokinase (331 aa).

This sequence belongs to the carbohydrate kinase PfkB family.

The catalysed reaction is 5-dehydro-2-deoxy-D-gluconate + ATP = 6-phospho-5-dehydro-2-deoxy-D-gluconate + ADP + H(+). It functions in the pathway polyol metabolism; myo-inositol degradation into acetyl-CoA; acetyl-CoA from myo-inositol: step 5/7. In terms of biological role, catalyzes the phosphorylation of 5-dehydro-2-deoxy-D-gluconate (2-deoxy-5-keto-D-gluconate or DKG) to 6-phospho-5-dehydro-2-deoxy-D-gluconate (DKGP). In Halalkalibacterium halodurans (strain ATCC BAA-125 / DSM 18197 / FERM 7344 / JCM 9153 / C-125) (Bacillus halodurans), this protein is 5-dehydro-2-deoxygluconokinase.